Here is a 393-residue protein sequence, read N- to C-terminus: Isocitrate dehydrogenase [NAD] subunit gamma 1, mitochondrial (393 aa).

The transit peptide at 1-39 (MALKVAIAAGSAAKAIFKPALLCRPWEVLAAHEAPRRSI) directs the protein to the mitochondrion. T120 contacts citrate. S130 carries the phosphoserine modification. N133 provides a ligand contact to citrate. R136 and R167 together coordinate substrate. N6-acetyllysine is present on K206. The residue at position 226 (K226) is an N6-succinyllysine. A substrate-binding site is contributed by D254. D254 is a Mn(2+) binding site. The ADP site is built by N312, T313, and N324.

This sequence belongs to the isocitrate and isopropylmalate dehydrogenases family. As to quaternary structure, heterooligomer of subunits alpha (IDH3A), beta (IDH3B), and gamma (IDH3G) in the apparent ratio of 2:1:1. The heterodimer containing one IDH3A and one IDH3B subunit and the heterodimer containing one IDH3A and one IDH3G subunit assemble into a heterotetramer (which contains two subunits of IDH3A, one of IDH3B and one of IDH3G) and further into the heterooctamer. Requires Mg(2+) as cofactor. Mn(2+) is required as a cofactor.

The protein resides in the mitochondrion. With respect to regulation, the heterotetramer and the heterodimer composed of IDH3A and IDH3G subunits can be allosterically activated by citrate (CIT) or/and ADP, and the two activators can act independently or synergistically. The heterodimer composed of IDH3A and IDH3B subunits cannot be allosterically regulated and the allosteric regulation of the heterotetramer is through the IDH3G subunit and not the IDH3B subunit. The IDH3G subunit contains the allosteric site which consists of a CIT-binding site and an ADP-binding site, and the binding of CIT and ADP causes conformational changes at the allosteric site which are transmitted to the active site in the catalytic subunit (IDH3A) through a cascade of conformational changes at the heterodimer interface, leading to stabilization of the isocitrate-binding at the active site and thus activation of the enzyme. ATP can activate the heterotetramer and the heterodimer composed of IDH3A and IDH3G subunits at low concentrations but inhibits their activities at high concentrations, whereas ATP exhibits only inhibitory effect on the heterodimer composed of IDH3A and IDH3B subunits. In terms of biological role, regulatory subunit which plays a role in the allosteric regulation of the enzyme catalyzing the decarboxylation of isocitrate (ICT) into alpha-ketoglutarate. The heterodimer composed of the alpha (IDH3A) and beta (IDH3B) subunits and the heterodimer composed of the alpha (IDH3A) and gamma (IDH3G) subunits, have considerable basal activity but the full activity of the heterotetramer (containing two subunits of IDH3A, one of IDH3B and one of IDH3G) requires the assembly and cooperative function of both heterodimers. This is Isocitrate dehydrogenase [NAD] subunit gamma 1, mitochondrial (Idh3g) from Rattus norvegicus (Rat).